Reading from the N-terminus, the 119-residue chain is Holo-[acyl-carrier-protein] synthase (119 aa).

Mg(2+)-binding residues include Asp8 and Glu50.

The protein belongs to the P-Pant transferase superfamily. AcpS family. Mg(2+) is required as a cofactor.

Its subcellular location is the cytoplasm. It carries out the reaction apo-[ACP] + CoA = holo-[ACP] + adenosine 3',5'-bisphosphate + H(+). Functionally, transfers the 4'-phosphopantetheine moiety from coenzyme A to a Ser of acyl-carrier-protein. This Clavibacter sepedonicus (Clavibacter michiganensis subsp. sepedonicus) protein is Holo-[acyl-carrier-protein] synthase.